The primary structure comprises 2515 residues: Zinc finger FYVE domain-containing protein 26 (2515 aa).

Disordered regions lie at residues 520–540 (GPSD…SSPG), 586–634 (PHLP…EPHG), 672–696 (SSRG…DGLQ), and 718–800 (SIQG…SSLI). Positions 623–634 (PEPKDSSPEPHG) are enriched in basic and acidic residues. The span at 738 to 748 (PSLRRGRRTRK) shows a compositional bias: basic residues. Positions 749 to 758 (SRADDQDKGS) are enriched in basic and acidic residues. Over residues 759–783 (RSSLENTSSELSTSTSEGSLSAASG) the composition is skewed to low complexity. Ser-774 is subject to Phosphoserine. Residues 842 to 869 (MFMERYQEVIQELAQVEHKIENQNSDGG) adopt a coiled-coil conformation. The tract at residues 1253–1273 (TENPTLERKPPSSPRDSSPPA) is disordered. Phosphoserine is present on residues Ser-1718, Ser-1740, Ser-1756, and Ser-1758. The disordered stretch occupies residues 1740–1760 (SAEFSSATAPGVSTVHSPSVR). An FYVE-type zinc finger spans residues 1788–1848 (DESESVCMVC…VCDQCYSYFN (61 aa)). Zn(2+) is bound by residues Cys-1794, Cys-1797, Cys-1811, Cys-1814, Cys-1819, Cys-1822, Cys-1840, and Cys-1843.

The protein belongs to the ZFYVE26 family. Interacts with AP5Z1, AP5B1, AP5S1 and SPG11. Interacts with TTC19 and KIF13A.

The protein localises to the cytoplasm. The protein resides in the cytoskeleton. It localises to the microtubule organizing center. Its subcellular location is the centrosome. It is found in the midbody. Functionally, phosphatidylinositol 3-phosphate-binding protein required for the abscission step in cytokinesis: recruited to the midbody during cytokinesis and acts as a regulator of abscission. May also be required for efficient homologous recombination DNA double-strand break repair. The sequence is that of Zinc finger FYVE domain-containing protein 26 (ZFYVE26) from Bos taurus (Bovine).